The primary structure comprises 491 residues: Probable cytosol aminopeptidase (491 aa).

Mn(2+) contacts are provided by Lys-263 and Asp-268. The active site involves Lys-275. Mn(2+) is bound by residues Asp-286, Asp-345, and Glu-347. Residue Arg-349 is part of the active site.

Belongs to the peptidase M17 family. Requires Mn(2+) as cofactor.

The protein localises to the cytoplasm. It carries out the reaction Release of an N-terminal amino acid, Xaa-|-Yaa-, in which Xaa is preferably Leu, but may be other amino acids including Pro although not Arg or Lys, and Yaa may be Pro. Amino acid amides and methyl esters are also readily hydrolyzed, but rates on arylamides are exceedingly low.. The enzyme catalyses Release of an N-terminal amino acid, preferentially leucine, but not glutamic or aspartic acids.. Its function is as follows. Presumably involved in the processing and regular turnover of intracellular proteins. Catalyzes the removal of unsubstituted N-terminal amino acids from various peptides. The chain is Probable cytosol aminopeptidase from Haemophilus influenzae (strain PittGG).